The sequence spans 67 residues: SPbeta prophage-derived uncharacterized protein YoqK (67 aa).

This Bacillus subtilis (strain 168) protein is SPbeta prophage-derived uncharacterized protein YoqK (yoqK).